The chain runs to 668 residues: DNA ligase (668 aa).

NAD(+) is bound by residues Asp-34–Asp-38, Ser-83–Leu-84, and Glu-114. Lys-116 functions as the N6-AMP-lysine intermediate in the catalytic mechanism. NAD(+) contacts are provided by Arg-137, Glu-171, Lys-286, and Lys-310. Cys-404, Cys-407, Cys-422, and Cys-427 together coordinate Zn(2+). Residues Asn-588 to Gly-668 form the BRCT domain.

It belongs to the NAD-dependent DNA ligase family. LigA subfamily. Mg(2+) serves as cofactor. Requires Mn(2+) as cofactor.

It catalyses the reaction NAD(+) + (deoxyribonucleotide)n-3'-hydroxyl + 5'-phospho-(deoxyribonucleotide)m = (deoxyribonucleotide)n+m + AMP + beta-nicotinamide D-nucleotide.. Functionally, DNA ligase that catalyzes the formation of phosphodiester linkages between 5'-phosphoryl and 3'-hydroxyl groups in double-stranded DNA using NAD as a coenzyme and as the energy source for the reaction. It is essential for DNA replication and repair of damaged DNA. The chain is DNA ligase from Mycoplasma capricolum subsp. capricolum (strain California kid / ATCC 27343 / NCTC 10154).